The following is a 186-amino-acid chain: uncharacterized protein (186 aa).

Positions 121 to 146 (TSPLLKKNKPSSDQDDTSKQSFDQDE) are disordered.

Belongs to the chlamydial CPn_0422/CT_273/TC_0545 family.

This is an uncharacterized protein from Chlamydia muridarum (strain MoPn / Nigg).